A 378-amino-acid polypeptide reads, in one-letter code: D-alanine--D-alanine ligase (378 aa).

The 226-residue stretch at 149–374 folds into the ATP-grasp domain; that stretch reads KVLLRAAGIP…FRTVVTDLIE (226 aa). An ATP-binding site is contributed by 189-247; that stretch reads EAGLQYPLFVKPSRAGSSFGVTKVEQIGDAAALAAAVFEASRHDWRVLVEQGIDAREIE. Positions 328, 341, and 343 each coordinate Mg(2+).

It belongs to the D-alanine--D-alanine ligase family. The cofactor is Mg(2+). Mn(2+) serves as cofactor.

The protein localises to the cytoplasm. It carries out the reaction 2 D-alanine + ATP = D-alanyl-D-alanine + ADP + phosphate + H(+). It participates in cell wall biogenesis; peptidoglycan biosynthesis. Cell wall formation. The polypeptide is D-alanine--D-alanine ligase (Bifidobacterium animalis subsp. lactis (strain AD011)).